Consider the following 425-residue polypeptide: Inhibin beta A chain (425 aa).

The signal sequence occupies residues 1-20; it reads MPLLWLRGFLLASCWIIVRS. The propeptide occupies 21–309; the sequence is SPTPGSEGHS…EDHPHRRRRR (289 aa). N-linked (GlcNAc...) asparagine glycosylation is present at Asn-165. The interval 260-289 is disordered; it reads KKRKEEEGEGKKRDGEGGAGGDEEKEQSHR. The span at 263-275 shows a compositional bias: basic and acidic residues; it reads KEEEGEGKKRDGE. 4 disulfide bridges follow: Cys-313–Cys-321, Cys-320–Cys-390, Cys-349–Cys-422, and Cys-353–Cys-424.

Belongs to the TGF-beta family. In terms of assembly, dimeric, linked by one or more disulfide bonds. Inhibin A is a dimer of alpha/INHA and beta-A/INHBA. Activin A is a homodimer of beta-A/INHBA. Activin AB is a dimer of beta-A/INHBA and beta-B/INHBB. Interacts with FST and FSTL3; these interactions prevent activin A interaction to its type II receptor. Activin A interacts with ACVR2A. Activin A interacts with BMPR2. Inhibin A interacts with ACVR1; this interaction creates a non-signaling complex (NSC) that inhibits ACVR1-mediated BMP signaling. Inhibin A interacts with ACVR2A.

It is found in the secreted. Inhibins/activins are involved in regulating a number of diverse functions such as hypothalamic and pituitary hormone secretion, gonadal hormone secretion, germ cell development and maturation, erythroid differentiation, insulin secretion, nerve cell survival, embryonic axial development or bone growth, depending on their subunit composition. In terms of biological role, activin A is a homodimer of INHBA that plays a role in several essential biological processes including embryonic development, stem cell maintenance and differentiation, haematopoiesis, cell proliferation and tissue fibrosis. Signals through type I (such as ACVR1B or ACVR1C) and type II receptors (such as ACVR2A, ACVR2B or BMPR2) which, upon ligand binding, phosphorylate SMAD2 and SMAD3 intracellular signaling mediators that form a complex with SMAD4, translocate to the nucleus and modulate gene expression. Can also activate alternative non-canonical intracellular signaling pathways including the p38 MAPK, extracellular signal-regulated kinases 1/2 (ERK1/2) and c-Jun N-terminal kinases (JNKs) to modulate cell migration and differentiation. Alternatively, promotes osteoblastic differentiation via ACVRL1-SMAD1/5/9 pathway. In addition, can engage the type I receptor ACVR1 to form an ACVR1-activin A-type II receptor non-signaling complex (NSC) that renders receptors unavailable for engagement with BMPs, hence resulting in an apparent inhibition of ACVR1-mediated BMP signaling. Functionally, inhibin A is a dimer of alpha/INHA and beta-A/INHBA that functions as a feedback regulator in the hypothalamic-pituitary-gonadal (HPG) axis. Inhibits the secretion of FSH from the anterior pituitary gland by acting on pituitary gonadotrope cells. Antagonizes activin A by binding to the proteoglycan, betaglycan, and forming a stable complex with and, thereby, sequestering type II activin receptors while excluding type I receptor. This Ovis aries (Sheep) protein is Inhibin beta A chain (INHBA).